A 319-amino-acid polypeptide reads, in one-letter code: Transcription factor VBP (319 aa).

Low complexity-rich tracts occupy residues 1-31 and 143-158; these read MPGR…GAVA and ASAS…STAV. Disordered stretches follow at residues 1–35 and 139–186; these read MPGR…QQPE and EKEP…DPDC. Polar residues predominate over residues 159-180; that stretch reads YQQSEAASSTESPPQNERNTPS. In terms of domain architecture, bZIP spans 243 to 306; the sequence is DEKYWTRRKK…GRCKNIVSKY (64 aa). Positions 245–265 are basic motif; sequence KYWTRRKKNNVAAKRSRDARR. The tract at residues 266 to 273 is leucine-zipper; sequence LKENQITI.

It belongs to the bZIP family. PAR subfamily. In terms of assembly, binds DNA as a homodimer or a heterodimer. Exists as a stable dimer in the absence of DNA. As to expression, isoform 1 and isoform 3 are expressed in a variety of somatic tissues, including liver, heart, intestine, stomach and kidney. Both isoforms are also expressed in hepatoma (LMH) cells and in embryonic fibroblast cell lines. Isoform 2 and isoform 4 are expressed in adult heart and intestine.

The protein localises to the nucleus. In terms of biological role, transcription factor that binds to and transactivates the vitellogenin II (VTG2) promoter. Binds to the palindromic sequence 5'-GTTTACATAAAC-3'. This Gallus gallus (Chicken) protein is Transcription factor VBP (TEF).